The following is a 152-amino-acid chain: Urease accessory protein UreE (152 aa).

Belongs to the UreE family.

It localises to the cytoplasm. Involved in urease metallocenter assembly. Binds nickel. Probably functions as a nickel donor during metallocenter assembly. The polypeptide is Urease accessory protein UreE (Enterobacter sp. (strain 638)).